Reading from the N-terminus, the 46-residue chain is MFMMNNNMFIMFMIMYNVMRVNITRCSRVMFTTFYMITNKYIYIFM.

The protein localises to the mitochondrion. This is an uncharacterized protein from Saccharomyces cerevisiae (strain ATCC 204508 / S288c) (Baker's yeast).